A 540-amino-acid chain; its full sequence is Peptide chain release factor 3 (540 aa).

The tr-type G domain occupies 14–283 (ELRRNFAIIS…YFLNYALKPG (270 aa)). Residues 23–30 (SHPDAGKT), 91–95 (DTPGH), and 145–148 (NKLD) contribute to the GTP site.

The protein belongs to the TRAFAC class translation factor GTPase superfamily. Classic translation factor GTPase family. PrfC subfamily.

It localises to the cytoplasm. In terms of biological role, increases the formation of ribosomal termination complexes and stimulates activities of RF-1 and RF-2. It binds guanine nucleotides and has strong preference for UGA stop codons. It may interact directly with the ribosome. The stimulation of RF-1 and RF-2 is significantly reduced by GTP and GDP, but not by GMP. The polypeptide is Peptide chain release factor 3 (Trichormus variabilis (strain ATCC 29413 / PCC 7937) (Anabaena variabilis)).